We begin with the raw amino-acid sequence, 162 residues long: Glycine cleavage system H protein, mitochondrial (162 aa).

Residues Met1–Phe31 constitute a mitochondrion transit peptide. The region spanning Val53–Lys135 is the Lipoyl-binding domain. Lys94 bears the N6-lipoyllysine mark.

It belongs to the GcvH family. As to quaternary structure, the glycine cleavage system is composed of four proteins: P, T, L and H. (R)-lipoate is required as a cofactor.

It is found in the mitochondrion. Its function is as follows. The glycine cleavage system catalyzes the degradation of glycine. The H protein shuttles the methylamine group of glycine from the P protein to the T protein. The chain is Glycine cleavage system H protein, mitochondrial (GDCSH) from Flaveria pringlei.